The primary structure comprises 376 residues: Succinyl-diaminopimelate desuccinylase (376 aa).

A Zn(2+)-binding site is contributed by histidine 64. Aspartate 66 is an active-site residue. Aspartate 97 lines the Zn(2+) pocket. Catalysis depends on glutamate 131, which acts as the Proton acceptor. The Zn(2+) site is built by glutamate 132, glutamate 160, and histidine 347.

Belongs to the peptidase M20A family. DapE subfamily. Homodimer. Requires Zn(2+) as cofactor. Co(2+) serves as cofactor.

The enzyme catalyses N-succinyl-(2S,6S)-2,6-diaminopimelate + H2O = (2S,6S)-2,6-diaminopimelate + succinate. Its pathway is amino-acid biosynthesis; L-lysine biosynthesis via DAP pathway; LL-2,6-diaminopimelate from (S)-tetrahydrodipicolinate (succinylase route): step 3/3. In terms of biological role, catalyzes the hydrolysis of N-succinyl-L,L-diaminopimelic acid (SDAP), forming succinate and LL-2,6-diaminopimelate (DAP), an intermediate involved in the bacterial biosynthesis of lysine and meso-diaminopimelic acid, an essential component of bacterial cell walls. In Wigglesworthia glossinidia brevipalpis, this protein is Succinyl-diaminopimelate desuccinylase.